We begin with the raw amino-acid sequence, 772 residues long: Ribosomal protein S6 kinase alpha-4 (772 aa).

One can recognise a Protein kinase 1 domain in the interval 33–301 (FELLKVLGTG…AQEVRNHPFF (269 aa)). Residues 39-47 (LGTGAYGKV) and K65 contribute to the ATP site. Catalysis depends on D161, which acts as the Proton acceptor. At S196 the chain carries Phosphoserine; by autocatalysis. The 70-residue stretch at 302–371 (QGLDWVALAA…VAPSILFDHN (70 aa)) folds into the AGC-kinase C-terminal domain. S343 bears the Phosphoserine; by MAPK1, MAPK3 and MAPK14 mark. S347 carries the post-translational modification Phosphoserine. 2 positions are modified to phosphoserine; by autocatalysis: S360 and S365. The Protein kinase 2 domain maps to 411–674 (DLREPALGQG…LEGLRGSSWL (264 aa)). Residues 417-425 (LGQGSFSVC) and K440 each bind ATP. Catalysis depends on D530, which acts as the Proton acceptor. A Phosphothreonine modification is found at T542. T568 carries the post-translational modification Phosphothreonine; by MAPK1, MAPK3 and MAPK14. Phosphoserine is present on residues S634 and S678. Disordered regions lie at residues 673 to 696 (WLQD…SSGP) and 728 to 772 (AKRR…LPPS). The residue at position 687 (T687) is a Phosphothreonine. The segment at 725–772 (APLAKRRKQKLRSATASRRGSPAPANPGRAPVASKGAPRRANGPLPPS) is required for nuclear targeting and association with MAPK14. S737 carries the phosphoserine; by autocatalysis modification. At S745 the chain carries Phosphoserine.

The protein belongs to the protein kinase superfamily. AGC Ser/Thr protein kinase family. S6 kinase subfamily. As to quaternary structure, forms a complex with either MAPK1/ERK2 or MAPK3/ERK1 in quiescent cells which transiently dissociates following mitogenic stimulation. Also associates with MAPK14/p38-alpha. Activated RPS6KA4 associates with and phosphorylates the NF-kappa-B p65 subunit RELA. It depends on Mg(2+) as a cofactor. In terms of processing, ser-343 and Thr-568 phosphorylation is required for kinase activity. Ser-343 and Ser-196 are autophosphorylated by the C-terminal kinase domain, and their phosphorylation is essential for the catalytic activity of the N-terminal kinase domain. Phosphorylated at Ser-343, Thr-568 and Thr-687 by MAPK1/ERK2, MAPK3/ERK1 and MAPK14/p38-alpha. Autophosphorylated at Ser-737 and Ser-745 by the N-terminal kinase domain.

The protein resides in the nucleus. The enzyme catalyses L-seryl-[protein] + ATP = O-phospho-L-seryl-[protein] + ADP + H(+). It catalyses the reaction L-threonyl-[protein] + ATP = O-phospho-L-threonyl-[protein] + ADP + H(+). Its activity is regulated as follows. Activated by phosphorylation at Ser-343, Thr-568 and Thr-687 by MAPK1/ERK2, MAPK3/ERK1 and MAPK14/p38-alpha, and by further autophosphorylation of Ser-196, Ser-360 and Ser-365 by the activated C-terminal kinase domain. Its function is as follows. Serine/threonine-protein kinase that is required for the mitogen or stress-induced phosphorylation of the transcription factors CREB1 and ATF1 and for the regulation of the transcription factor RELA, and that contributes to gene activation by histone phosphorylation and functions in the regulation of inflammatory genes. Phosphorylates CREB1 and ATF1 in response to mitogenic or stress stimuli such as UV-C irradiation, epidermal growth factor (EGF) and anisomycin. Plays an essential role in the control of RELA transcriptional activity in response to TNF. Phosphorylates 'Ser-10' of histone H3 in response to mitogenics, stress stimuli and EGF, which results in the transcriptional activation of several immediate early genes, including proto-oncogenes c-fos/FOS and c-jun/JUN. May also phosphorylate 'Ser-28' of histone H3. Mediates the mitogen- and stress-induced phosphorylation of high mobility group protein 1 (HMGN1/HMG14). In lipopolysaccharide-stimulated primary macrophages, acts downstream of the Toll-like receptor TLR4 to limit the production of pro-inflammatory cytokines. Functions probably by inducing transcription of the MAP kinase phosphatase DUSP1 and the anti-inflammatory cytokine interleukin 10 (IL10), via CREB1 and ATF1 transcription factors. The protein is Ribosomal protein S6 kinase alpha-4 (RPS6KA4) of Homo sapiens (Human).